Consider the following 257-residue polypeptide: Acetylglutamate kinase (257 aa).

Substrate-binding positions include 41-42 (GG), Arg63, and Asn155.

This sequence belongs to the acetylglutamate kinase family. ArgB subfamily.

The protein localises to the cytoplasm. The catalysed reaction is N-acetyl-L-glutamate + ATP = N-acetyl-L-glutamyl 5-phosphate + ADP. It functions in the pathway amino-acid biosynthesis; L-arginine biosynthesis; N(2)-acetyl-L-ornithine from L-glutamate: step 2/4. Its function is as follows. Catalyzes the ATP-dependent phosphorylation of N-acetyl-L-glutamate. In Solibacter usitatus (strain Ellin6076), this protein is Acetylglutamate kinase.